We begin with the raw amino-acid sequence, 155 residues long: 3-hydroxyacyl-[acyl-carrier-protein] dehydratase FabZ (155 aa).

Histidine 57 is a catalytic residue.

It belongs to the thioester dehydratase family. FabZ subfamily.

It is found in the cytoplasm. It catalyses the reaction a (3R)-hydroxyacyl-[ACP] = a (2E)-enoyl-[ACP] + H2O. Functionally, involved in unsaturated fatty acids biosynthesis. Catalyzes the dehydration of short chain beta-hydroxyacyl-ACPs and long chain saturated and unsaturated beta-hydroxyacyl-ACPs. The sequence is that of 3-hydroxyacyl-[acyl-carrier-protein] dehydratase FabZ from Cereibacter sphaeroides (strain ATCC 17025 / ATH 2.4.3) (Rhodobacter sphaeroides).